A 530-amino-acid chain; its full sequence is Copine-D (530 aa).

C2 domains lie at 1-122 and 130-248; these read MNPI…RMKM and LSGS…EFEI. Asp-25, Asp-31, Asp-85, Asp-87, and Asp-100 together coordinate Ca(2+). The region spanning 289–507 is the VWFA domain; it reads NLMVAIDCTA…ALAHETLKEI (219 aa).

The protein belongs to the copine family. The cofactor is Ca(2+).

This Dictyostelium discoideum (Social amoeba) protein is Copine-D (cpnD).